A 115-amino-acid chain; its full sequence is Large ribosomal subunit protein bL19 (115 aa).

This sequence belongs to the bacterial ribosomal protein bL19 family.

Its function is as follows. This protein is located at the 30S-50S ribosomal subunit interface and may play a role in the structure and function of the aminoacyl-tRNA binding site. This chain is Large ribosomal subunit protein bL19, found in Francisella philomiragia subsp. philomiragia (strain ATCC 25017 / CCUG 19701 / FSC 153 / O#319-036).